The chain runs to 546 residues: Glutamyl-tRNA(Gln) amidotransferase subunit A, chloroplastic/mitochondrial (546 aa).

Positions 21 to 52 are disordered; it reads KRRRFHSSTPLFLSQPQTLASTDPPSSPPQSQ. A compositionally biased stretch (polar residues) spans 27–43; sequence SSTPLFLSQPQTLASTD. Residues lysine 123 and serine 198 each act as charge relay system in the active site. Serine 222 serves as the catalytic Acyl-ester intermediate.

It belongs to the amidase family. GatA subfamily. As to quaternary structure, subunit of the heterotrimeric GatCAB amidotransferase (AdT) complex, composed of A, B and C subunits.

It localises to the mitochondrion. The protein resides in the plastid. The protein localises to the chloroplast stroma. The enzyme catalyses L-glutamyl-tRNA(Gln) + L-glutamine + ATP + H2O = L-glutaminyl-tRNA(Gln) + L-glutamate + ADP + phosphate + H(+). Its function is as follows. Allows the formation of correctly charged Gln-tRNA(Gln) through the transamidation of misacylated Glu-tRNA(Gln) in chloroplasts and mitochondria. The reaction takes place in the presence of glutamine and ATP through an activated gamma-phospho-Glu-tRNA(Gln). The chain is Glutamyl-tRNA(Gln) amidotransferase subunit A, chloroplastic/mitochondrial from Vitis vinifera (Grape).